A 379-amino-acid polypeptide reads, in one-letter code: Bifunctional enzyme IspD/IspF (379 aa).

The interval 1 to 213 is 2-C-methyl-D-erythritol 4-phosphate cytidylyltransferase; the sequence is MSQVSLVVMG…QGFEPPFGGC (213 aa). The interval 214 to 379 is 2-C-methyl-D-erythritol 2,4-cyclodiphosphate synthase; it reads YGGSGFDVHA…DWTKHACFNR (166 aa). A divalent metal cation-binding residues include Asp-220 and His-222. Residues 220-222 and 246-247 each bind 4-CDP-2-C-methyl-D-erythritol 2-phosphate; these read DVH and HS. Position 254 (His-254) interacts with a divalent metal cation. 4-CDP-2-C-methyl-D-erythritol 2-phosphate-binding positions include 268 to 270, 273 to 277, 344 to 347, Phe-351, and Arg-354; these read DIG, FPDSD, and TTTE.

In the N-terminal section; belongs to the IspD/TarI cytidylyltransferase family. IspD subfamily. This sequence in the C-terminal section; belongs to the IspF family. Requires a divalent metal cation as cofactor.

It catalyses the reaction 2-C-methyl-D-erythritol 4-phosphate + CTP + H(+) = 4-CDP-2-C-methyl-D-erythritol + diphosphate. It carries out the reaction 4-CDP-2-C-methyl-D-erythritol 2-phosphate = 2-C-methyl-D-erythritol 2,4-cyclic diphosphate + CMP. It functions in the pathway isoprenoid biosynthesis; isopentenyl diphosphate biosynthesis via DXP pathway; isopentenyl diphosphate from 1-deoxy-D-xylulose 5-phosphate: step 2/6. The protein operates within isoprenoid biosynthesis; isopentenyl diphosphate biosynthesis via DXP pathway; isopentenyl diphosphate from 1-deoxy-D-xylulose 5-phosphate: step 4/6. Its function is as follows. Bifunctional enzyme that catalyzes the formation of 4-diphosphocytidyl-2-C-methyl-D-erythritol from CTP and 2-C-methyl-D-erythritol 4-phosphate (MEP) (IspD), and catalyzes the conversion of 4-diphosphocytidyl-2-C-methyl-D-erythritol 2-phosphate (CDP-ME2P) to 2-C-methyl-D-erythritol 2,4-cyclodiphosphate (ME-CPP) with a corresponding release of cytidine 5-monophosphate (CMP) (IspF). The sequence is that of Bifunctional enzyme IspD/IspF from Wolinella succinogenes (strain ATCC 29543 / DSM 1740 / CCUG 13145 / JCM 31913 / LMG 7466 / NCTC 11488 / FDC 602W) (Vibrio succinogenes).